The following is a 261-amino-acid chain: MARVTTQFTGIIMYRQDYRERDLLVKMLTDKIGPAMFFVKNAKKRGFRMTADILPFTHGTYIGSLDENGLSFINTASDTSQYKKIASDISKNAYVTYILALVDSAFNDGRSIGGWFKQVAAALDLIEKGLDEQIITNVIETQLLVAFGVAPVWDRCVVCGRNDLALDFSEQYGGMLCQNHWSLDEHRLYLDRKTAYYLQQFATINLQKLNSIRINPATKRRLQQVLDTLYDNEVGLNLKAKRFIKQMNKWEQNIGKLSMND.

This sequence belongs to the RecO family.

In terms of biological role, involved in DNA repair and RecF pathway recombination. The chain is DNA repair protein RecO from Limosilactobacillus reuteri (strain DSM 20016) (Lactobacillus reuteri).